Reading from the N-terminus, the 418-residue chain is MTLLALGINHKTAPVSLRERVSFSPDKLDQALDSLLAQPMVQGGVVLSTCNRTELYLSVEERDDLQEALIRWLCDYHNLNEDDLRNSLYWHQDNDAVSHLMRVASGLDSLVLGEPQILGQVKKAFADSQKGHMKASELERMFQKSFSVAKRVRTETDIGASAVSVAFAACTLARQIFESLSTVTVLLVGAGETIELVARHLREHKVQKMIIANRTRERAQILADEVGAEVIALSDIDERLREADIIISSTASPLPIIGKGMVERALKSRRNQPMLLVDIAVPRDVEPEVGKLANAYLYSVDDLQSIISHNLAQRKAAAVEAETIVAQETSEFMAWLRAQSASETIREYRSQAEHVRDELTAKALAALEQGGDAQAIMQDLAWKLTNRLIHAPTKSLQQAARDGDNERLNILRDSLGLE.

Substrate contacts are provided by residues 49-52 (TCNR), Ser-109, 114-116 (EPQ), and Gln-120. The active-site Nucleophile is Cys-50. 189-194 (GAGETI) provides a ligand contact to NADP(+).

It belongs to the glutamyl-tRNA reductase family. As to quaternary structure, homodimer.

The enzyme catalyses (S)-4-amino-5-oxopentanoate + tRNA(Glu) + NADP(+) = L-glutamyl-tRNA(Glu) + NADPH + H(+). It functions in the pathway porphyrin-containing compound metabolism; protoporphyrin-IX biosynthesis; 5-aminolevulinate from L-glutamyl-tRNA(Glu): step 1/2. Its function is as follows. Catalyzes the NADPH-dependent reduction of glutamyl-tRNA(Glu) to glutamate 1-semialdehyde (GSA). In Escherichia coli O7:K1 (strain IAI39 / ExPEC), this protein is Glutamyl-tRNA reductase.